The primary structure comprises 1259 residues: Translocation and assembly module subunit TamB (1259 aa).

The residue at position 1 (Met-1) is an N-formylmethionine. Over 1 to 6 (MSLWKK) the chain is Cytoplasmic. A helical; Signal-anchor for type II membrane protein transmembrane segment spans residues 7–27 (ISLGVVIVILLLLGSVAFLVG). Over 28 to 1259 (TTSGLHLVFK…ALDLLYQFEF (1232 aa)) the chain is Periplasmic.

The protein belongs to the TamB family. Interacts with TamA to form the translocation and assembly module (TAM).

It localises to the cell inner membrane. Component of the translocation and assembly module (TAM), which facilitates the insertion and assembly of specific beta-barrel proteins into the outer membrane. Promotes the assembly and secretion across the outer membrane of a subset of autotransporters, such as Ag43. Involved in the assembly of the outer membrane usher protein FimD. In vitro, when TAM is reconstituted into preformed liposomes, it can promote the assembly of several outer membrane proteins, including OmpA, EspP, Ag43 and FadL. TamA is sufficient to catalyze a low level of outer membrane protein (OMP) assembly, but both TamA and TamB are required for efficient OMP assembly. TamB may regulate TamA activity. It could regulate conformational changes in TamA to drive its function in OMP assembly. It could also act as a chaperone that facilitate the transport of nascent membrane proteins across the periplasm to TamA in the outer membrane. Functionally, in addition, is involved in outer membrane lipid homeostasis. Likely transports phospholipids between the inner membrane and the outer membrane. It would provide a bridge-like structure that protects phospholipids as they travel across the periplasm. One possible explanation for the apparent dual function of TAM is that TamB is a somewhat generic transporter of hydrophobic molecules. Its function is as follows. TamB, YdbH and YhdP are redundant, but not equivalent, in performing an essential function for growth and maintaining lipid homeostasis in the outer membrane. The transport functions of TamB and YhdP could be differentiated according to the fatty acid saturation state of the phospholipids, with TamB transporting more unsaturated phospholipids and YhdP more saturated phospholipids. Any of these three proteins is sufficient for growth. This chain is Translocation and assembly module subunit TamB, found in Escherichia coli (strain K12).